We begin with the raw amino-acid sequence, 412 residues long: Serine hydroxymethyltransferase (412 aa).

(6S)-5,6,7,8-tetrahydrofolate contacts are provided by residues L117 and 121-123; that span reads GHL. The residue at position 226 (K226) is an N6-(pyridoxal phosphate)lysine. Residue E241 coordinates (6S)-5,6,7,8-tetrahydrofolate.

The protein belongs to the SHMT family. Homodimer. Pyridoxal 5'-phosphate serves as cofactor.

It is found in the cytoplasm. The enzyme catalyses (6R)-5,10-methylene-5,6,7,8-tetrahydrofolate + glycine + H2O = (6S)-5,6,7,8-tetrahydrofolate + L-serine. Its pathway is one-carbon metabolism; tetrahydrofolate interconversion. The protein operates within amino-acid biosynthesis; glycine biosynthesis; glycine from L-serine: step 1/1. Catalyzes the reversible interconversion of serine and glycine with tetrahydrofolate (THF) serving as the one-carbon carrier. This reaction serves as the major source of one-carbon groups required for the biosynthesis of purines, thymidylate, methionine, and other important biomolecules. Also exhibits THF-independent aldolase activity toward beta-hydroxyamino acids, producing glycine and aldehydes, via a retro-aldol mechanism. The chain is Serine hydroxymethyltransferase from Staphylococcus carnosus (strain TM300).